Here is a 127-residue protein sequence, read N- to C-terminus: Small ribosomal subunit protein uS12 (127 aa).

D89 is subject to 3-methylthioaspartic acid.

It belongs to the universal ribosomal protein uS12 family. In terms of assembly, part of the 30S ribosomal subunit. Contacts proteins S8 and S17. May interact with IF1 in the 30S initiation complex.

With S4 and S5 plays an important role in translational accuracy. Functionally, interacts with and stabilizes bases of the 16S rRNA that are involved in tRNA selection in the A site and with the mRNA backbone. Located at the interface of the 30S and 50S subunits, it traverses the body of the 30S subunit contacting proteins on the other side and probably holding the rRNA structure together. The combined cluster of proteins S8, S12 and S17 appears to hold together the shoulder and platform of the 30S subunit. The protein is Small ribosomal subunit protein uS12 of Campylobacter fetus subsp. fetus (strain 82-40).